The chain runs to 61 residues: Small ribosomal subunit protein uS14 (61 aa).

Zn(2+) is bound by residues cysteine 24, cysteine 27, cysteine 40, and cysteine 43.

The protein belongs to the universal ribosomal protein uS14 family. Zinc-binding uS14 subfamily. In terms of assembly, part of the 30S ribosomal subunit. Contacts proteins S3 and S10. Zn(2+) is required as a cofactor.

Its function is as follows. Binds 16S rRNA, required for the assembly of 30S particles and may also be responsible for determining the conformation of the 16S rRNA at the A site. The protein is Small ribosomal subunit protein uS14 of Mesomycoplasma hyopneumoniae (strain 232) (Mycoplasma hyopneumoniae).